The primary structure comprises 394 residues: Ceramide glucosyltransferase (394 aa).

Over methionine 1–glycine 10 the chain is Lumenal. The helical transmembrane segment at methionine 11–tyrosine 32 threads the bilayer. The Cytoplasmic portion of the chain corresponds to threonine 33–arginine 195. A short sequence motif (D1) is located at residue aspartate 92. An N6-acetyllysine modification is found at lysine 117. Position 144 (aspartate 144) is a short sequence motif, D2. The chain crosses the membrane as a helical span at residues tyrosine 196–methionine 215. Residues arginine 216–threonine 287 are Lumenal-facing. A short sequence motif (D3) is located at residue aspartate 236. Aspartate 236 serves as the catalytic Proton acceptor. The (Q/R)XXRW signature appears at arginine 272 to tryptophan 276. Residues isoleucine 288–glycine 304 traverse the membrane as a helical segment. The Cytoplasmic segment spans residues tryptophan 305–histidine 309. The chain crosses the membrane as a helical span at residues valine 310–isoleucine 328. At phenylalanine 329–aspartate 348 the chain is on the lumenal side. A helical membrane pass occupies residues tyrosine 349–tryptophan 369. Topologically, residues aspartate 370–valine 394 are cytoplasmic.

The protein belongs to the glycosyltransferase 2 family. Interacts with RTN1; regulates the ceramide glucosyltransferase activity of UGCG. Found in all tissues examined.

It localises to the golgi apparatus membrane. The enzyme catalyses an N-acylsphing-4-enine + UDP-alpha-D-glucose = a beta-D-glucosyl-(1&lt;-&gt;1')-N-acylsphing-4-enine + UDP + H(+). It catalyses the reaction UDP-alpha-D-xylose + an N-acylsphing-4-enine = a beta-D-xylosyl-(1&lt;-&gt;1')-N-acylsphing-4-enine + UDP + H(+). It carries out the reaction N-(9Z-octadecenoyl)-sphing-4-enine + UDP-alpha-D-xylose = beta-D-xylosyl-(1&lt;-&gt;1')-N-(9Z-octadecenoyl)-sphing-4-enine + UDP + H(+). It functions in the pathway lipid metabolism; sphingolipid metabolism. In terms of biological role, participates in the initial step of the glucosylceramide-based glycosphingolipid/GSL synthetic pathway at the cytosolic surface of the Golgi. Catalyzes the transfer of glucose from UDP-glucose to ceramide to produce glucosylceramide/GlcCer (such as beta-D-glucosyl-(1&lt;-&gt;1')-N-acylsphing-4-enine). GlcCer is the core component of glycosphingolipids/GSLs, amphipathic molecules consisting of a ceramide lipid moiety embedded in the outer leaflet of the membrane, linked to one of hundreds of different externally oriented oligosaccharide structures. Glycosphingolipids are essential components of membrane microdomains that mediate membrane trafficking and signal transduction, implicated in many fundamental cellular processes, including growth, differentiation, migration, morphogenesis, cell-to-cell and cell-to-matrix interactions. They are required for instance in the proper development and functioning of the nervous system. As an example of their role in signal transduction, they regulate the leptin receptor/LEPR in the leptin-mediated signaling pathway. They also play an important role in the establishment of the skin barrier regulating keratinocyte differentiation and the proper assembly of the cornified envelope. The biosynthesis of GSLs is also required for the proper intestinal endocytic uptake of nutritional lipids. Catalyzes the synthesis of xylosylceramide/XylCer (such as beta-D-xylosyl-(1&lt;-&gt;1')-N-acylsphing-4-enine) using UDP-Xyl as xylose donor. This Homo sapiens (Human) protein is Ceramide glucosyltransferase.